A 1486-amino-acid chain; its full sequence is MASAADDSALGGQEERESFTIYHEGRELQLHWRGLPPLQRFPASRICSNAGGELLLLTTDHALYSAKLQANREHMDLQLLRTDVVDMDFCSGSQELFVVLTNGSVQRQATGSGRDVGHPHAWQTLGFDPLELHAEGVRIRRVCCSAQGVVFVGASGETYVMGSCGEVFKAEQQPRHMRLYEEGKELLDLAAGNEHFVMLVAPYNLADDALQLSVASAKEEPEDERASVKSISSGHSERSVAANTRHLLHQGYALLHTQLFTFGASNNGLLGSGDHIRRANVMRLQKLDSMGVCSIAAGLEHTVARTLDGRLYHWGLNNHSQLGEDVSSPMEITITENTAALPIEQNSALEATCGDYHTLLLNASGQIHSLQPAPPMRHLQQSSTYAQTLLQLQLGAAWPRQLRLLMCSGGYTLQNQRQFQRQYHYYLSHLQSQLQLLLKHRQAVQTLEIWQRQSALEPLSALGPLLINWERILCLLVATLHSLEGFYRADFVQPADLLFICHYKEYIDLFDGYTKAYCDVFSVNGFGEAVVAITGLSSPLAELNEESYVTRLFQQPFSIYQLFVQFMELLVRTQSEYGEHRVAWSEFARHSCISQELAVNTKDFWSSNDRNPRIVQFRGRHRRVILTSALVPLKLVTSGISRSSNSFILFSDFLCQVSGNSLYSYPLTTLWVWTEGDSLRLTTPEKSFLVSTRSQEMRKVWLDQLQSSIIASLGKPLGSPVPSYRSTGYEFSREHPKFSRVKACGTWRKGVLHGNCYLEYPDGSVYCGELQHGIIEGFGKMVIPTTGLYVGNFKGGRFHGHGVYEMHCKDSPESEVYEGNFCEGLFHGHGVMRNNRYIYVGEYQANARSGYGVIEDLVSGDKYMGMFADNKRSGIGSCITNRGDYFEGSFSGDDLTGSGVAVFENDYYYEGELTLLGPNGRGEYYMPSGDACGGSGAMGTGEFDDTCELIGNKMFGQLSGTWDTVRIQAGELVLNRRFPKYPSSLGRQVVDHNRKWRSLFNNFESDLANCTASTSSSGGNQSAGTLRKSSKPTLSTAQIWNCIAVYMSKQRAREGTKPGNYFNNILLSLPLPQKTSSPLAKARTTTSALSKLQTEAASALDFLGFPPRRIQSQEALNSKPGGLQRADSLISMGHNTSRDLDNSSLASFQLDQSLMNSTVNGDESSTFNESFSKLSHNNNNSISKHMNNIDCSITSTTSTTSAVLDQVPSFGMALVLTEQDVTSIRLYLEQAFKDRHHPLYVLNERIANCFHYSYGYWKVKPTPILAKQAMREWESISRRIYRFVRKMFPALPEELCQMEGSREVISHITLLYPLVLSEGIYSTLFVLYANKYSRKDEMYRQNLNLAEKLKDQELVELMGHESFLHNVMLDPKFVESVQTLKELQEKFSPQDMLTVIQRSTQLLTEAYEHAMAANAAQLNADNMIPLTMLTMLRAAVPHLGAELALLDDLTGGPNFQAEMNGMAGYCYTTLKAAYEHVTSRALQKIP.

3 RCC1 repeats span residues 147–201 (QGVV…MLVA), 256–307 (HTQL…ARTL), and 308–363 (DGRL…LLNA). 6 MORN repeats span residues 744-765 (CGTW…DGSV), 766-784 (YCGE…MVIP), 789-804 (YVGN…HGVY), 817-832 (YEGN…HGVM), 839-853 (YVGE…GYGV), and 863-884 (YMGM…NRGD). Residues 1333 to 1486 (SRKDEMYRQN…VTSRALQKIP (154 aa)) form the VPS9 domain.

As to expression, in the embryo, expressed in a wide range of tissues including the epidermis and the ventral nerve cord.

Has guanine nucleotide exchange factor (GEF) activity towards Rab5. Promotes the exchange of GDP to GTP, converting inactive GDP-bound Rab5 into its active GTP-bound form. In Drosophila melanogaster (Fruit fly), this protein is Alsin homolog.